Here is a 31-residue protein sequence, read N- to C-terminus: 23S rRNA methylase leader peptide (31 aa).

Its function is as follows. This peptide is involved in the control mechanism of the synthesis of the erythromycin resistance protein. This Escherichia coli protein is 23S rRNA methylase leader peptide (ermC).